The following is a 99-amino-acid chain: MPKRKSPENTEDKDGSKVTKQEPTRRSARLSAKPAPPKPEPKPRKTSAKKEPGAKISRGAKGKKEEKQEAGKEGTAPSENGETKAEEAQKTESVDNEGE.

Composition is skewed to basic and acidic residues over residues 1 to 25, 39 to 53, and 62 to 72; these read MPKR…EPTR, PEPK…KEPG, and GKKEEKQEAGK. The disordered stretch occupies residues 1–99; sequence MPKRKSPENT…KTESVDNEGE (99 aa). At S6 the chain carries Phosphoserine. T10 bears the Phosphothreonine mark. Phosphoserine occurs at positions 78 and 93. The span at 81–93 shows a compositional bias: basic and acidic residues; it reads GETKAEEAQKTES.

It belongs to the HMGN family. Interacts with the ligand binding domain of the thyroid receptor (TR) (in vitro). Requires the presence of thyroid hormone for its interaction. Interacts with transcriptional regulator SEHBP. Interacts with nucleosomes.

The protein localises to the nucleus. Functionally, binds to nucleosomes, regulating chromatin structure and consequently, chromatin-dependent processes such as transcription, DNA replication and DNA repair. Affects both insulin and glucagon levels and modulates the expression of pancreatic genes involved in insulin secretion. Regulates the expression of the glucose transporter SLC2A2 by binding specifically to its promoter region and recruiting PDX1 and additional transcription factors. Regulates the expression of SLC6A9, a glycine transporter which regulates the glycine concentration in synaptic junctions in the central nervous system, by binding to its transcription start site. May play a role in ocular development and astrocyte function. In Pongo abelii (Sumatran orangutan), this protein is High mobility group nucleosome-binding domain-containing protein 3 (HMGN3).